Consider the following 493-residue polypeptide: Cardiolipin synthase 1 (493 aa).

2 consecutive transmembrane segments (helical) span residues 13–33 and 45–65; these read FTII…IIIF and WAWL…YLFF. 2 consecutive PLD phosphodiesterase domains span residues 228–255 and 406–433; these read MNNR…GDEY and ENGF…DFRS. Residues histidine 233, lysine 235, aspartate 240, histidine 411, lysine 413, and aspartate 418 contribute to the active site.

Belongs to the phospholipase D family. Cardiolipin synthase subfamily.

Its subcellular location is the cell membrane. It catalyses the reaction 2 a 1,2-diacyl-sn-glycero-3-phospho-(1'-sn-glycerol) = a cardiolipin + glycerol. Functionally, catalyzes the reversible phosphatidyl group transfer from one phosphatidylglycerol molecule to another to form cardiolipin (CL) (diphosphatidylglycerol) and glycerol. This is Cardiolipin synthase 1 (cls1) from Staphylococcus aureus (strain COL).